We begin with the raw amino-acid sequence, 295 residues long: Autophagy-related protein 37 (295 aa).

The region spanning 5–103 (VDRVFVHALN…LIDTMHRYAT (99 aa)) is the ACB domain. Disordered regions lie at residues 124-162 (NSPSSSLSSPRPNQSTGAGAQQPQQEPEQASDGEGPLKE) and 174-201 (LRSQRQVDLEDDEVDVPTSDRSSGRWQR). The span at 125–153 (SPSSSLSSPRPNQSTGAGAQQPQQEPEQA) shows a compositional bias: low complexity. Asparagine 136 carries N-linked (GlcNAc...) asparagine glycosylation. Residues 244-264 (WLLVKHIFADLVILSVVLLWL) form a helical membrane-spanning segment.

It belongs to the ATG37 family.

It is found in the peroxisome membrane. Its function is as follows. Acyl-CoA binding protein which acts as the peroxisome receptor for pexophagy. Required for both micropexophagy and macropexophagy, but not for the cytoplasm to vacuole transport (Cvt) or autophagy pathways. Required for functional micropexophagic apparatus (MIPA) and relocation of ATG11 to the peroxisome-sequestering arms of the vacuole. Binds palmitoyl-CoA but not oleyl-CoA. The chain is Autophagy-related protein 37 from Gibberella zeae (strain ATCC MYA-4620 / CBS 123657 / FGSC 9075 / NRRL 31084 / PH-1) (Wheat head blight fungus).